The sequence spans 364 residues: Transcription factor TGA4 (364 aa).

A disordered region spans residues 39–79 (PGSIIIPTNEKPDSLSEDTSHGTEGTPHKFDQEASTSRHPD). Residues 48–79 (EKPDSLSEDTSHGTEGTPHKFDQEASTSRHPD) are compositionally biased toward basic and acidic residues. Residues 78 to 141 (PDKIQRRLAQ…NGVDTNALSF (64 aa)) enclose the bZIP domain. Coiled coils occupy residues 79 to 127 (DKIQ…RQQG) and 257 to 277 (NLRQ…EKLQ). The tract at residues 80-100 (KIQRRLAQNREAARKSRLRKK) is basic motif. A leucine-zipper region spans residues 106–120 (LETSRLKLIHLEQEL). Residues 149–359 (IVAFEMEYGH…RALSSSWAAR (211 aa)) form the DOG1 domain. An intrachain disulfide couples cysteine 256 to cysteine 262.

The protein belongs to the bZIP family. As to quaternary structure, binds DNA as a dimer. Interaction with the Dof domain proteins OBP1, OBP2 or OBP3 enhances the binding to the ocs element. Interacts with RAP2-3/EPB, an ethylene-responsive element binding protein. The reduced form interacts with NPR1. As to expression, predominantly expressed in roots.

Its subcellular location is the nucleus. Its function is as follows. Transcriptional activator that binds specifically to the DNA sequence 5'-TGACG-3'. Recognizes ocs elements like the as-1 motif of the cauliflower mosaic virus 35S promoter. Binding to the as-1-like cis elements mediate auxin- and salicylic acid-inducible transcription. May be involved in the induction of the systemic acquired resistance (SAR) via its interaction with NPR1. Could also bind to the Hex-motif (5'-TGACGTGG-3') another cis-acting element found in plant histone promoters. This Arabidopsis thaliana (Mouse-ear cress) protein is Transcription factor TGA4 (TGA4).